The primary structure comprises 413 residues: Aspartate aminotransferase, cytoplasmic (413 aa).

G39 and W141 together coordinate L-aspartate. The residue at position 149 (S149) is a Phosphoserine. Position 195 (N195) interacts with L-aspartate. K259 is subject to N6-(pyridoxal phosphate)lysine. Position 318 is an N6-succinyllysine (K318). R387 contacts L-aspartate.

This sequence belongs to the class-I pyridoxal-phosphate-dependent aminotransferase family. In terms of assembly, homodimer. Pyridoxal 5'-phosphate is required as a cofactor. Expressed in neurons of the retina. Localizes to the inner and outer plexiform layers, the inner and outer nuclear layer and the outer segments of photoreceptors.

The protein resides in the cytoplasm. It catalyses the reaction L-aspartate + 2-oxoglutarate = oxaloacetate + L-glutamate. The enzyme catalyses L-cysteine + 2-oxoglutarate = 2-oxo-3-sulfanylpropanoate + L-glutamate. It carries out the reaction (2S)-2-aminobutanoate + 2-oxoglutarate = 2-oxobutanoate + L-glutamate. The catalysed reaction is 3-sulfino-L-alanine + 2-oxoglutarate = 3-sulfinopyruvate + L-glutamate. With respect to regulation, inhibited by calcium ions. Biosynthesis of L-glutamate from L-aspartate or L-cysteine. Important regulator of levels of glutamate, the major excitatory neurotransmitter of the vertebrate central nervous system. Acts as a scavenger of glutamate in brain neuroprotection. The aspartate aminotransferase activity is involved in hepatic glucose synthesis during development and in adipocyte glyceroneogenesis. Using L-cysteine as substrate, regulates levels of mercaptopyruvate, an important source of hydrogen sulfide. Mercaptopyruvate is converted into H(2)S via the action of 3-mercaptopyruvate sulfurtransferase (3MST). Hydrogen sulfide is an important synaptic modulator and neuroprotectant in the brain. This is Aspartate aminotransferase, cytoplasmic from Mus musculus (Mouse).